The following is a 290-amino-acid chain: 4-hydroxy-3-methylbut-2-enyl diphosphate reductase (290 aa).

Residue Cys13 coordinates [4Fe-4S] cluster. (2E)-4-hydroxy-3-methylbut-2-enyl diphosphate-binding residues include His41 and His75. 2 residues coordinate dimethylallyl diphosphate: His41 and His75. Isopentenyl diphosphate-binding residues include His41 and His75. Cys97 contacts [4Fe-4S] cluster. His129 serves as a coordination point for (2E)-4-hydroxy-3-methylbut-2-enyl diphosphate. Residue His129 coordinates dimethylallyl diphosphate. His129 lines the isopentenyl diphosphate pocket. Residue Glu131 is the Proton donor of the active site. Thr167 is a binding site for (2E)-4-hydroxy-3-methylbut-2-enyl diphosphate. Cys198 contributes to the [4Fe-4S] cluster binding site. (2E)-4-hydroxy-3-methylbut-2-enyl diphosphate is bound by residues Ser226, Ser227, Asn228, and Ser270. Residues Ser226, Ser227, Asn228, and Ser270 each contribute to the dimethylallyl diphosphate site. Residues Ser226, Ser227, Asn228, and Ser270 each contribute to the isopentenyl diphosphate site.

It belongs to the IspH family. The cofactor is [4Fe-4S] cluster.

The enzyme catalyses isopentenyl diphosphate + 2 oxidized [2Fe-2S]-[ferredoxin] + H2O = (2E)-4-hydroxy-3-methylbut-2-enyl diphosphate + 2 reduced [2Fe-2S]-[ferredoxin] + 2 H(+). It catalyses the reaction dimethylallyl diphosphate + 2 oxidized [2Fe-2S]-[ferredoxin] + H2O = (2E)-4-hydroxy-3-methylbut-2-enyl diphosphate + 2 reduced [2Fe-2S]-[ferredoxin] + 2 H(+). It functions in the pathway isoprenoid biosynthesis; dimethylallyl diphosphate biosynthesis; dimethylallyl diphosphate from (2E)-4-hydroxy-3-methylbutenyl diphosphate: step 1/1. It participates in isoprenoid biosynthesis; isopentenyl diphosphate biosynthesis via DXP pathway; isopentenyl diphosphate from 1-deoxy-D-xylulose 5-phosphate: step 6/6. Its function is as follows. Catalyzes the conversion of 1-hydroxy-2-methyl-2-(E)-butenyl 4-diphosphate (HMBPP) into a mixture of isopentenyl diphosphate (IPP) and dimethylallyl diphosphate (DMAPP). Acts in the terminal step of the DOXP/MEP pathway for isoprenoid precursor biosynthesis. The polypeptide is 4-hydroxy-3-methylbut-2-enyl diphosphate reductase (Parabacteroides distasonis (strain ATCC 8503 / DSM 20701 / CIP 104284 / JCM 5825 / NCTC 11152)).